The sequence spans 126 residues: Fluoride-specific ion channel FluC (126 aa).

4 helical membrane-spanning segments follow: residues 5-25 (VLAV…LGLW), 35-55 (WGTL…MAFF), 68-88 (FAVT…LEMF), and 99-119 (ALVG…LGFL). G75 and T78 together coordinate Na(+).

This sequence belongs to the fluoride channel Fluc/FEX (TC 1.A.43) family.

The protein resides in the cell inner membrane. It catalyses the reaction fluoride(in) = fluoride(out). With respect to regulation, na(+) is not transported, but it plays an essential structural role and its presence is essential for fluoride channel function. Its function is as follows. Fluoride-specific ion channel. Important for reducing fluoride concentration in the cell, thus reducing its toxicity. This Marinobacter nauticus (strain ATCC 700491 / DSM 11845 / VT8) (Marinobacter aquaeolei) protein is Fluoride-specific ion channel FluC.